A 263-amino-acid polypeptide reads, in one-letter code: 1-(5-phosphoribosyl)-5-[(5-phosphoribosylamino)methylideneamino] imidazole-4-carboxamide isomerase (263 aa).

Belongs to the HisA/HisF family.

It localises to the cytoplasm. It carries out the reaction 1-(5-phospho-beta-D-ribosyl)-5-[(5-phospho-beta-D-ribosylamino)methylideneamino]imidazole-4-carboxamide = 5-[(5-phospho-1-deoxy-D-ribulos-1-ylimino)methylamino]-1-(5-phospho-beta-D-ribosyl)imidazole-4-carboxamide. It functions in the pathway amino-acid biosynthesis; L-histidine biosynthesis; L-histidine from 5-phospho-alpha-D-ribose 1-diphosphate: step 4/9. The chain is 1-(5-phosphoribosyl)-5-[(5-phosphoribosylamino)methylideneamino] imidazole-4-carboxamide isomerase (HIS6) from Eremothecium gossypii (strain ATCC 10895 / CBS 109.51 / FGSC 9923 / NRRL Y-1056) (Yeast).